Reading from the N-terminus, the 99-residue chain is Large ribosomal subunit protein uL23 (99 aa).

Belongs to the universal ribosomal protein uL23 family. As to quaternary structure, part of the 50S ribosomal subunit. Contacts protein L29, and trigger factor when it is bound to the ribosome.

One of the early assembly proteins it binds 23S rRNA. One of the proteins that surrounds the polypeptide exit tunnel on the outside of the ribosome. Forms the main docking site for trigger factor binding to the ribosome. This is Large ribosomal subunit protein uL23 from Oenococcus oeni (strain ATCC BAA-331 / PSU-1).